A 519-amino-acid chain; its full sequence is MRLPSIATLFHPLQSFSIRGGIHPETHKHLTSECEIETMPMPALIRLPLQQHIGAEAEPIVKRDDLVLKGQLIAKARGPLSANIHAPTSGRVIAVGHFVAPHASGLPVPTITIRPDGEDKWGPHLPRLRPENAAPEEIAAQVAAAGIVGMGGATFPSAVKLNLRAKYDLTTLIINGAECEPYLTCDDRLMRERAEEIADGIGIMARALGVKQVFVAIESNKPQAIEAMTRYNRALGYTFKIHVVPTQYPMGSEKHLVKMITGQETPARALTADLGVVVHNIATAHAVHLAVRYGEPLIARTVTVSGHGIRRPANLRVLIGTPVSEIIAHCGGFTEEPDRLLLGGPMMGMPIQNPRVPVVKGTNGILALTAAETPEAKTMPCIRCGRCVQGCPVGLTPFELNARIHAGDLEGAAKVGLMDCLACGCCSYNCPANLPLVQSFQFAKGKLSERQSRKHQQEETKRLAAARKAREEAIAEAKKQMMLKRKAEMAAKKKAEEAAAAAAMPPPATATAIQGEATP.

2 consecutive 4Fe-4S ferredoxin-type domains span residues 372–401 (ETPE…FELN) and 411–440 (GAAK…VQSF). 8 residues coordinate [4Fe-4S] cluster: Cys-381, Cys-384, Cys-387, Cys-391, Cys-420, Cys-423, Cys-426, and Cys-430. Residues 494–519 (KAEEAAAAAAMPPPATATAIQGEATP) are disordered.

Belongs to the 4Fe4S bacterial-type ferredoxin family. RnfC subfamily. In terms of assembly, the complex is composed of six subunits: RnfA, RnfB, RnfC, RnfD, RnfE and RnfG. [4Fe-4S] cluster is required as a cofactor.

The protein resides in the cellular chromatophore membrane. Functionally, part of a membrane-bound complex that couples electron transfer with translocation of ions across the membrane. Required for nitrogen fixation. Involved in electron transfer to nitrogenase. The chain is Ion-translocating oxidoreductase complex subunit C from Rhodobacter capsulatus (Rhodopseudomonas capsulata).